Consider the following 141-residue polypeptide: Hemoglobin subunit alpha-1 (141 aa).

The region spanning 1–141 (VLTEDDKNHI…VAKTLVAHYR (141 aa)) is the Globin domain. His-58 is a binding site for O2. A heme b-binding site is contributed by His-87.

This sequence belongs to the globin family. In terms of assembly, heterotetramer of two alpha chains and two beta chains. In terms of tissue distribution, red blood cells.

Its function is as follows. Involved in oxygen transport from the lung to the various peripheral tissues. In Iguana iguana (Common iguana), this protein is Hemoglobin subunit alpha-1.